The sequence spans 401 residues: MVKFDSGSESEMTNGDELHINSKHEVKSRMANGNGVHNVPDHDQFQDRAEMEVLILPDLFSSLMSVPARENPHYASVKADADEWISFVINADAKWASRNKRVDFTYLASIWAPDCSAFALRTSADWNSWAFLFDDQFDEGHLSNDLEGAINEIARTREIMEGTAPRYTADSEHPIRYVFQTLCDRVKQNPEGFYAGKPSSERFYRRWMWAHELYWEGLVAQVRTNVEGRSFTRGPEEYLAMRRGSLGAYPALVNNEWAYGIDLPEEVADHPLVFEIMIIMSDQILLVKDILSYEKDLRLGVDHNMVRLLKAKGLSTQQAINEVGVMINNCYRRYYRALSELPCFGEEADRALLGYLEVEKNHALGSLLWSYNTGRYFKSKEDGARVRKTRELLIPKKMAAL.

The interval 1-20 (MVKFDSGSESEMTNGDELHI) is disordered. Residues Asp-134 and Glu-139 each contribute to the Mg(2+) site. The DDXXD motif signature appears at 134–138 (DDQFD). Arg-242 lines the substrate pocket. Position 292 (Ser-292) interacts with Mg(2+). Lys-295 contacts substrate. Asp-296 provides a ligand contact to Mg(2+). Residue 375 to 376 (RY) participates in substrate binding.

This sequence belongs to the terpene synthase family. It depends on Mg(2+) as a cofactor.

This chain is Inactive (1R,4R,5S)-(-)-guaia-6,10(14)-diene synthase, found in Gibberella fujikuroi (strain CBS 195.34 / IMI 58289 / NRRL A-6831) (Bakanae and foot rot disease fungus).